The primary structure comprises 448 residues: MSPLECSECFGDQLLHRTYTWQLTLHSRPNYTRKRDTRSESLEIPISVVLPQRGTAEPFPRLHNLYSTPRCAQQAALPRLSRRMASQHSYPLNRFSSVPLDPMERPMSQADLELDYNPPRVQLSDEMFVFQDGRWVNENCRLQSPYFSPSASFHHKLHHKRLAKECMLQEENKSLREENKALREENRMLSKENKILQVFWEEHKASLGREESRAPSPLLHKDSASLEVVKKDHVALQVPRGKEDSTLQLLREENRALQQLLEQKQAYWAQAEDTAAPAEESKPAPSPHEEPCSPGLLQDQGSGLSSRFEEPKGPPARQEDSKELRALRKMVSNMSGPSGEEEAKVGPGLPDGCQPLQLLREMRQALQALLKENRLLQEENRTLQVLRAEHRGFQEENKALWENNKLKLQQKLVIDTVTEVTARMEMLIEELYAFMPARSQDPKKPSRV.

A phosphoserine mark is found at S41, S86, S89, S97, S124, S144, S148, and S150. Residues 164–198 (KECMLQEENKSLREENKALREENRMLSKENKILQV) adopt a coiled-coil conformation. Phosphoserine occurs at positions 212 and 225. Positions 242–267 (KEDSTLQLLREENRALQQLLEQKQAY) form a coiled coil. Residues 270–323 (QAEDTAAPAEESKPAPSPHEEPCSPGLLQDQGSGLSSRFEEPKGPPARQEDSKE) form a disordered region. Composition is skewed to basic and acidic residues over residues 279–291 (EESKPAPSPHEEP) and 307–323 (RFEEPKGPPARQEDSKE). Residues S335 and S338 each carry the phosphoserine modification. A coiled-coil region spans residues 356–414 (LQLLREMRQALQALLKENRLLQEENRTLQVLRAEHRGFQEENKALWENNKLKLQQKLVI).

Belongs to the chibby family. SPERT subfamily. Homodimer. Binds to NEK1. Testis-specific.

The sequence is that of Protein chibby homolog 2 from Homo sapiens (Human).